The chain runs to 299 residues: MKKIKCALIGPGNIGTDLLYKLRRSTVLEPVWMVGVDPASDGLARAREFGLKTTDKGVDGLLPHVAADEIRIAFDATSAYVHRDNSDKLTALGVKMIDLTPAAIGPYCVPPVNLDAHLDSAQTNVNMVTCGGQATIPMVYAVSRVQPVAYGEIVATVSSRSVGPGTRKNIDEFTRTTSGAIEQVGGARKGKAIIVINPAEPPLIMRDTIHCLTDGPPDVDAITASVHAMVKEVQRYVPGYTLKNGPVFDGNRVSVFMEVEGLGDYLPKYAGNLDIMTAAAAATAERFAEQMLAATAATA.

Cys130 serves as the catalytic Acyl-thioester intermediate. NAD(+) is bound by residues 161 to 169 and Asn272; that span reads SVGPGTRKN.

It belongs to the acetaldehyde dehydrogenase family.

The enzyme catalyses acetaldehyde + NAD(+) + CoA = acetyl-CoA + NADH + H(+). The polypeptide is Acetaldehyde dehydrogenase 2 (Burkholderia lata (strain ATCC 17760 / DSM 23089 / LMG 22485 / NCIMB 9086 / R18194 / 383)).